Reading from the N-terminus, the 60-residue chain is UPF0434 protein SG0997 (60 aa).

Belongs to the UPF0434 family.

The polypeptide is UPF0434 protein SG0997 (Sodalis glossinidius (strain morsitans)).